Here is a 279-residue protein sequence, read N- to C-terminus: Movement protein (279 aa).

The span at 256 to 266 shows a compositional bias: low complexity; sequence PPIAIGSPSAS. Positions 256-279 are disordered; it reads PPIAIGSPSASRNNSFRSQVVNGL. Over residues 267–279 the composition is skewed to polar residues; it reads RNNSFRSQVVNGL.

The protein belongs to the cucumovirus movement protein family.

It localises to the host cell junction. It is found in the host plasmodesma. Transports viral genome to neighboring plant cells directly through plasmosdesmata, without any budding. The movement protein allows efficient cell to cell propagation, by bypassing the host cell wall barrier. Acts by forming a tubular structure at the host plasmodesmata, enlarging it enough to allow free passage of virion capsids. The protein is Movement protein of Cucumis sativus (Cucumber).